The primary structure comprises 535 residues: Dynein axonemal assembly factor 8 (535 aa).

5 disordered regions span residues 112 to 215 (AELA…QERR), 228 to 267 (RDAC…EGPP), 344 to 380 (PADT…QGMR), 395 to 444 (TVPP…LRSC), and 461 to 535 (IAQP…LDQL). Residues 125 to 139 (RTKDASSQEGRDPGR) are compositionally biased toward basic and acidic residues. Positions 166–175 (GSLSFNTKGS) are enriched in polar residues. At S175 the chain carries Phosphoserine. Position 362 is a phosphoserine (S362). The span at 415-424 (DSEEEEEEVE) shows a compositional bias: acidic residues. A compositionally biased stretch (polar residues) spans 435–444 (SPSSLGLRSC).

It localises to the dynein axonemal particle. The protein resides in the cytoplasm. In cyliated cells, dynein axonemal particle-specific protein required for deployment of ODA to the axoneme. Interacts with outer dynein arm (ODA) subunits. This is Dynein axonemal assembly factor 8 (DNAAF8) from Macaca fascicularis (Crab-eating macaque).